Here is a 426-residue protein sequence, read N- to C-terminus: Fc receptor-like B (426 aa).

The N-terminal stretch at 1–17 is a signal peptide; it reads MWPLTALLLLVPSSGQA. 2 Ig-like C2-type domains span residues 23-101 and 103-189; these read PILS…LSVS and DWLI…VAVT. Cystine bridges form between Cys44-Cys85 and Cys124-Cys168. Asn152 carries an N-linked (GlcNAc...) asparagine glycan. Positions 400–426 are disordered; it reads ELRGTPETPTSHFAVSPGTPETTPVES. Polar residues predominate over residues 406–426; sequence ETPTSHFAVSPGTPETTPVES.

As to expression, expressed at low levels. Expressed in B-lymphocytes. Detected in tonsil, lung, kidney, spleen and placenta. Expressed by a small subset of germinal center B-cells in tonsils and by melanocytes (at protein level).

It is found in the cytoplasm. It localises to the endoplasmic reticulum. This chain is Fc receptor-like B (FCRLB), found in Homo sapiens (Human).